The primary structure comprises 126 residues: UPF0102 protein plu4003 (126 aa).

Belongs to the UPF0102 family.

The protein is UPF0102 protein plu4003 of Photorhabdus laumondii subsp. laumondii (strain DSM 15139 / CIP 105565 / TT01) (Photorhabdus luminescens subsp. laumondii).